Reading from the N-terminus, the 144-residue chain is MRLNTLSPAAGAKSAAKRVGRGIGSGLGKTAGRGHKGQKSRSGGGVRVGFEGGQMPLKIRLPKFGFTSRRALVSAEVRISELAKVNGDVIDLNALKDANLVTRNIQFAKIVLSGTIERPVTVKGLKVTKGARAAIEAAGGKIEE.

The segment at 1–49 (MRLNTLSPAAGAKSAAKRVGRGIGSGLGKTAGRGHKGQKSRSGGGVRVG) is disordered. Residues 21-31 (RGIGSGLGKTA) are compositionally biased toward gly residues.

This sequence belongs to the universal ribosomal protein uL15 family. As to quaternary structure, part of the 50S ribosomal subunit.

Its function is as follows. Binds to the 23S rRNA. The sequence is that of Large ribosomal subunit protein uL15 from Shewanella piezotolerans (strain WP3 / JCM 13877).